Reading from the N-terminus, the 419-residue chain is CinA-like protein (419 aa).

Belongs to the CinA family.

The polypeptide is CinA-like protein (Acaryochloris marina (strain MBIC 11017)).